Here is a 118-residue protein sequence, read N- to C-terminus: MNERHLTGAASEMLVAYKFTKAGYTVYYPMLTQSKEDLVVCKDGKFSKVQVKTATTVQTNTGDAKQVRLGGCGRSEYKDGDFDILAVVVDEDVLIFTWDEVKGKTSMCVGKRNKGIKL.

This chain is Protein 5.3, found in Escherichia phage T7 (Bacteriophage T7).